The following is a 385-amino-acid chain: L-arabinitol 4-dehydrogenase (385 aa).

Residues Cys-54, His-79, Glu-80, Cys-109, Cys-112, Cys-115, Cys-123, and Glu-164 each contribute to the Zn(2+) site. Residues 191 to 192 (PI), Asp-212, Arg-217, Ile-292, and 316 to 318 (QYR) each bind NAD(+).

The protein belongs to the zinc-containing alcohol dehydrogenase family. Homotetramer. Zn(2+) is required as a cofactor.

It carries out the reaction L-arabinitol + NAD(+) = L-xylulose + NADH + H(+). It participates in carbohydrate degradation; L-arabinose degradation via L-arabinitol; D-xylulose 5-phosphate from L-arabinose (fungal route): step 2/5. In terms of biological role, catalyzes the NAD-dependent oxidation of L-arabinitol to L-xylulose in the fungal L-arabinose catabolic pathway. L-arabinose catabolism is important for using plant material as a carbon source. NADP cannot act as a cosubstrate. The sequence is that of L-arabinitol 4-dehydrogenase (lad1) from Penicillium rubens (strain ATCC 28089 / DSM 1075 / NRRL 1951 / Wisconsin 54-1255) (Penicillium chrysogenum).